The sequence spans 784 residues: Toll-like receptor 2 (784 aa).

Residues 1-20 (MPRALWTAWVWAVISVFTEG) form the signal peptide. Residues 21 to 587 (ASDQASSLSC…ARLSLSECHR (567 aa)) lie on the Extracellular side of the membrane. A disulfide bridge connects residues cysteine 30 and cysteine 36. LRR repeat units lie at residues 54–77 (VKSL…RCVN), 78–101 (LKTL…HLRN), 102–125 (LEYL…SLYV), 126–150 (LKFL…HLPN), 151–175 (LRTL…GLTF), 176–199 (LEEL…SIQN), 200–223 (ISHL…IVSS), 224–250 (LDYL…INTS), 251–278 (VKKL…YVSG), 279–308 (ILEV…YLGN), 309–337 (VETL…LTGK), 338–361 (VKRV…HLKS), 362–388 (LEYL…AWPV), 389–414 (LQTL…TLKN), 415–437 (LNNL…WPGK), 438–457 (MKQL…CLPQ), 458–478 (TLEI…ILPQ), 479–500 (LKEL…FLPV), and 501–524 (LSVM…SFPQ). A glycan (N-linked (GlcNAc...) asparagine) is linked at asparagine 114. The N-linked (GlcNAc...) asparagine glycan is linked to asparagine 199. N-linked (GlcNAc...) asparagine glycosylation is present at asparagine 248. The cysteines at positions 353 and 382 are disulfide-linked. Residues cysteine 432 and cysteine 454 are joined by a disulfide bond. Asparagine 442 is a glycosylation site (N-linked (GlcNAc...) asparagine). The region spanning 525-579 (LKALEAGGNNFICSCDFLSFAQGQQALARVLVDWPDGYRCDAPSHVRGQRVQDAR) is the LRRCT domain. The helical transmembrane segment at 588-608 (AAVVSAVCCALFLLLLLTGVL) threads the bilayer. Residues 609–784 (CHRFHGLWYM…WLNLRAAIRS (176 aa)) are Cytoplasmic-facing. The TIR domain maps to 639–782 (LCYDAFVSYS…AFWLNLRAAI (144 aa)). A Glycyl lysine isopeptide (Lys-Gly) (interchain with G-Cter in ubiquitin) cross-link involves residue lysine 754. The ATG16L1-binding motif motif lies at 761–778 (YLEWPTDETHREAFWLNL).

It belongs to the Toll-like receptor family. In terms of assembly, interacts with LY96, TLR1 and TLR6 (via extracellular domain). TLR2 seems to exist in heterodimers with either TLR1 or TLR6 before stimulation by the ligand. The heterodimers form bigger oligomers in response to their corresponding ligands as well as further heterotypic associations with other receptors such as CD14 and/or CD36. Binds MYD88 (via TIR domain). Interacts with TICAM1. Interacts with CNPY3. Interacts with ATG16L1. Interacts with PPP1R11. Interacts with TICAM2. Interacts with TIRAP. In terms of processing, ubiquitinated at Lys-754 by PPP1R11, leading to its degradation. Deubiquitinated by USP2. Post-translationally, glycosylation of Asn-442 is critical for secretion of the N-terminal ectodomain of TLR2.

The protein resides in the membrane. It localises to the cytoplasmic vesicle. Its subcellular location is the phagosome membrane. The protein localises to the membrane raft. Functionally, cooperates with LY96 to mediate the innate immune response to bacterial lipoproteins and other microbial cell wall components. Cooperates with TLR1 or TLR6 to mediate the innate immune response to bacterial lipoproteins or lipopeptides. Acts via MYD88 and TRAF6, leading to NF-kappa-B activation, cytokine secretion and the inflammatory response. May also promote apoptosis in response to lipoproteins. Forms activation clusters composed of several receptors depending on the ligand, these clusters trigger signaling from the cell surface and subsequently are targeted to the Golgi in a lipid-raft dependent pathway. Forms the cluster TLR2:TLR6:CD14:CD36 in response to diacylated lipopeptides and TLR2:TLR1:CD14 in response to triacylated lipopeptides. In Ovis aries (Sheep), this protein is Toll-like receptor 2 (TLR2).